A 288-amino-acid chain; its full sequence is MNNVKVPKIPGGGAISTLLKVGIIGGLGLYGATHSLYNVEGGHRAIMFNRLVGIKDKVYPEGTHLMIPWFERPVIYDVRARPYLVESTSGSRDLQMVKIGLRVLTRPMADQLPEIYRSLGENYSERVLPSIINETLKAVVAQYNASQLITQREAVSREIRKILTERAANFNVALDDVSITNLTFGKEFTAAIEAKQVAAQEAERAKFIVEKAEQDKRSAVIRAQGEAKSAQLIGQAIANNQAFITLRKIEAAREIAQTIANSANKVYLSSDDLLLNLQGMNLDVDAKN.

At Met1 to Pro10 the chain is on the mitochondrial matrix side. A helical; Signal-anchor for type II membrane protein transmembrane segment spans residues Gly11 to Tyr30. The Mitochondrial intermembrane segment spans residues Gly31–Asn288. Residues Lys186–Ala219 adopt a coiled-coil conformation.

The protein belongs to the prohibitin family. Component of a prohibitin multimeric complex in mitochondrial membranes. As to expression, mostly expressed in proliferative tissues, including vasculature, shoot and root apical tissues.

It localises to the mitochondrion inner membrane. Functionally, prohibitin probably acts as a holdase/unfoldase for the stabilization of newly synthesized mitochondrial proteins. This chain is Prohibitin-1, mitochondrial (PHB1), found in Arabidopsis thaliana (Mouse-ear cress).